The chain runs to 602 residues: Elongation factor 4 (602 aa).

The tr-type G domain occupies 2-184 (DHIRNFSIIA…AVIARMPPPK (183 aa)). Residues 14–19 (DHGKST) and 131–134 (NKMD) each bind GTP.

It belongs to the TRAFAC class translation factor GTPase superfamily. Classic translation factor GTPase family. LepA subfamily.

The protein localises to the cell inner membrane. It catalyses the reaction GTP + H2O = GDP + phosphate + H(+). In terms of biological role, required for accurate and efficient protein synthesis under certain stress conditions. May act as a fidelity factor of the translation reaction, by catalyzing a one-codon backward translocation of tRNAs on improperly translocated ribosomes. Back-translocation proceeds from a post-translocation (POST) complex to a pre-translocation (PRE) complex, thus giving elongation factor G a second chance to translocate the tRNAs correctly. Binds to ribosomes in a GTP-dependent manner. The sequence is that of Elongation factor 4 from Leptothrix cholodnii (strain ATCC 51168 / LMG 8142 / SP-6) (Leptothrix discophora (strain SP-6)).